Consider the following 873-residue polypeptide: Protein SEY1 (873 aa).

Residues 1–20 (MVANGHFAGSADGQHSSSYE) are disordered. Residues 1 to 749 (MVANGHFAGS…KRSAIGGITQ (749 aa)) lie on the Cytoplasmic side of the membrane. The 259-residue stretch at 49–307 (GFNYHLISVF…IPADGFAVYA (259 aa)) folds into the GB1/RHD3-type G domain. A GTP-binding site is contributed by 59–66 (GSQSTGKS). A coiled-coil region spans residues 482-506 (SNYQQELSLYQKDLERTSGQLRRDE). Residues 677-703 (DKWIGHTPSSATPADEEDLTPIGGVDD) are disordered. A compositionally biased stretch (acidic residues) spans 690-703 (ADEEDLTPIGGVDD). A helical membrane pass occupies residues 750-770 (VPLYFYGLLFALGWNEILAVL). The Lumenal portion of the chain corresponds to 771–773 (RNP). A helical membrane pass occupies residues 774-794 (VYFLLLFVCAIGAYITYQLNL). At 795-873 (WGPIIKMTEA…EDVDDDDDDF (79 aa)) the chain is on the cytoplasmic side. A disordered region spans residues 828-873 (RQAMAMSGARNATEEHEMSRLSRKPAERGGRKNRADEDVDDDDDDF). Residues 839–863 (ATEEHEMSRLSRKPAERGGRKNRAD) are compositionally biased toward basic and acidic residues. A compositionally biased stretch (acidic residues) spans 864–873 (EDVDDDDDDF).

This sequence belongs to the TRAFAC class dynamin-like GTPase superfamily. GB1/RHD3 GTPase family. RHD3 subfamily.

The protein localises to the endoplasmic reticulum membrane. Functionally, cooperates with the reticulon proteins and tubule-shaping DP1 family proteins to generate and maintain the structure of the tubular endoplasmic reticulum network. Has GTPase activity, which is required for its function in ER organization. This chain is Protein SEY1, found in Ajellomyces capsulatus (strain NAm1 / WU24) (Darling's disease fungus).